A 1494-amino-acid chain; its full sequence is Methyl-CpG-binding domain protein 5 (1494 aa).

The MBD domain occupies 11–81; sequence DKEGGLPAIQ…KVFNFDPGAA (71 aa). The segment at 57-68 is required for interaction with ASXL1/2/3; the sequence is DGTCKCGLECPL. 8 disordered regions span residues 123 to 152, 200 to 274, 329 to 350, 450 to 522, 594 to 641, 809 to 848, 1154 to 1173, and 1345 to 1375; these read LVLT…RNKS, RQRL…TPLS, HHKP…QKKP, IGRI…KDIP, LAGN…QSGR, PNPP…SSSI, HDGR…LDHG, and VNGC…SNEL. Residues 333-343 are compositionally biased toward pro residues; that stretch reads PQGPPPPPPPS. Composition is skewed to low complexity over residues 499–511 and 594–612; these read SPRP…PSTK and LAGN…AGSG. Polar residues-rich tracts occupy residues 614–624 and 813–835; these read TEGHSTLNTMF and QSRI…YNQT. The span at 836 to 848 shows a compositional bias: low complexity; sequence SSEAGGSGPSSSI. A PWWP domain is found at 1385-1409; it reads VGDLVWGQIKGLTSWPGKLVREDDV. Residues 1468-1494 form a disordered region; sequence MSGTVHQIPQGDRQMRPPKPKRRKISR. Positions 1483 to 1494 are enriched in basic residues; that stretch reads RPPKPKRRKISR.

Core component of the polycomb repressive deubiquitinase (PR-DUB) complex, at least composed of BAP1, one of ASXL1, ASXL2 or (probably) ASXL3, and one of MBD5 or MBD6. Distinct combinations of ASXL and MBD proteins may preferentially bind specific histone modification marks. The PR-DUB core associates with a number of accessory proteins, including FOXK1, FOXK2, KDM1B, HCFC1 and OGT; KDM1B specifically associates with ASXL2 PR-DUB complexes. Interacts (via MBD domain) with ASXL1, ASXL2 and ASXL3 (via PHD domain); the interaction is probably direct, mediates association with other PR-DUB complex core components. In terms of tissue distribution, detected in heart, placenta, liver, skeletal muscle, kidney and pancreas.

The protein resides in the nucleus. Its subcellular location is the chromosome. Non-catalytic component of the polycomb repressive deubiquitinase (PR-DUB) complex, a complex that specifically mediates deubiquitination of histone H2A monoubiquitinated at 'Lys-120' (H2AK119ub1). Important for stability of PR-DUB components and stimulating its ubiquitinase activity. As part of the PR-DUB complex, associates with chromatin enriched in histone marks H3K4me1, H3K4me3, and H3K27Ac, but not in H3K27me3. The PR-DUB complex is an epigenetic regulator of gene expression, including genes involved in cell growth and survivability. MBD5 and MBD6 containing complexes associate with distinct chromatin regions enriched in genes involved in different pathways. Heterochromatin recruitment is not mediated by DNA methylation. The PR-DUB complex is an epigenetic regulator of gene expression, including genes involved in development, cell communication, signaling, cell proliferation and cell viability. The polypeptide is Methyl-CpG-binding domain protein 5 (MBD5) (Homo sapiens (Human)).